The sequence spans 410 residues: Pyruvate dehydrogenase complex protein X component, mitochondrial (410 aa).

Residues 1-30 (MLSAISKVSTLKSCTRYLTKCNYHASAKLL) constitute a mitochondrion transit peptide. In terms of domain architecture, Lipoyl-binding spans 32 to 108 (VKTFSMPAMS…DVGEPIAYIA (77 aa)). Position 73 is an N6-lipoyllysine (K73). Residues 169–210 (TLLPSVSLLLAENNISKQKALKEIAPSGSNGRLLKGDVLAYL) enclose the Peripheral subunit-binding (PSBD) domain.

Belongs to the 2-oxoacid dehydrogenase family. In terms of assembly, eukaryotic pyruvate dehydrogenase (PDH) complexes are organized as a core consisting of the oligomeric dihydrolipoamide acetyl-transferase (E2), around which are arranged multiple copies of pyruvate dehydrogenase (E1), dihydrolipoamide dehydrogenase (E3) and protein X (E3BP) bound by non-covalent bonds.

It is found in the mitochondrion matrix. Its function is as follows. Required for anchoring dihydrolipoamide dehydrogenase (E3) to the dihydrolipoamide transacetylase (E2) core of the pyruvate dehydrogenase complexes of eukaryotes. This specific binding is essential for a functional PDH complex. This Saccharomyces cerevisiae (strain ATCC 204508 / S288c) (Baker's yeast) protein is Pyruvate dehydrogenase complex protein X component, mitochondrial (PDX1).